The following is a 582-amino-acid chain: Bifunctional lycopene cyclase/phytoene synthase (582 aa).

The tract at residues 1–261 (MNQNGTRLCY…VVLGLVGCDY (261 aa)) is lycopene beta-cyclase. 6 consecutive transmembrane segments (helical) span residues 34-54 (CTYT…FFTA), 59-79 (KICI…SYLI), 99-121 (IPIE…YCIF), 142-162 (YVVA…LLLG), 170-190 (LILV…YPFL), and 242-262 (ALFF…CDYA). The tract at residues 268–582 (YESLSQPASD…LLSALVYRLE (315 aa)) is phytoene synthase.

The protein in the N-terminal section; belongs to the lycopene beta-cyclase family. This sequence in the C-terminal section; belongs to the phytoene/squalene synthase family.

The protein resides in the membrane. The enzyme catalyses all-trans-lycopene = gamma-carotene. The catalysed reaction is gamma-carotene = all-trans-beta-carotene. It catalyses the reaction 2 (2E,6E,10E)-geranylgeranyl diphosphate = 15-cis-phytoene + 2 diphosphate. It functions in the pathway carotenoid biosynthesis; beta-carotene biosynthesis. The protein operates within carotenoid biosynthesis; phytoene biosynthesis; all-trans-phytoene from geranylgeranyl diphosphate: step 1/1. In terms of biological role, bifunctional enzyme that catalyzes the reactions from geranylgeranyl diphosphate to phytoene (phytoene synthase) and lycopene to beta-carotene via the intermediate gamma-carotene (lycopene cyclase). This is Bifunctional lycopene cyclase/phytoene synthase from Aspergillus niger (strain ATCC MYA-4892 / CBS 513.88 / FGSC A1513).